A 483-amino-acid polypeptide reads, in one-letter code: ATP-dependent RNA helicase DDX25 (483 aa).

The Nuclear export signal motif lies at 61-74 (LAANSLLNKLIRQS). A Q motif motif is present at residues 97–125 (KTFEELRLKEELLKGIYAMGFNRPSKIQE). A Nuclear localization signal motif is present at residues 100 to 114 (EELRLKEELLKGIYA). A Helicase ATP-binding domain is found at 130 to 300 (MMLAHPPQNL…ERIIPDPNVI (171 aa)). Residue 143–150 (SQSGTGKT) participates in ATP binding. The short motif at 247–250 (DEAD) is the DEAD box element. The Helicase C-terminal domain occupies 311–478 (NIRQYYVLCG…QLDPEDMDEI (168 aa)).

It belongs to the DEAD box helicase family. Post-translationally, phosphorylated on threonine residues. The phosphorylated form is found in the cytoplasm but not in the nucleus.

The protein localises to the cytoplasm. It is found in the nucleus. It catalyses the reaction ATP + H2O = ADP + phosphate + H(+). In terms of biological role, ATP-dependent RNA helicase. Required for mRNA export and translation regulation during spermatid development. The protein is ATP-dependent RNA helicase DDX25 (DDX25) of Bos taurus (Bovine).